Here is a 400-residue protein sequence, read N- to C-terminus: Glycine betaine/proline betaine transport system ATP-binding protein ProV (400 aa).

Positions 29 to 265 (LSKEQILEKT…PANDYVRTFF (237 aa)) constitute an ABC transporter domain. Position 61 to 68 (61 to 68 (GLSGSGKS)) interacts with ATP. 2 consecutive CBS domains span residues 282–341 (RTPN…GLDA) and 343–400 (LIDA…VNNG).

Belongs to the ABC transporter superfamily. As to quaternary structure, the complex is composed of two ATP-binding proteins (ProV), two transmembrane proteins (ProW) and a solute-binding protein (ProX).

It localises to the cell inner membrane. Functionally, part of the ProU ABC transporter complex involved in glycine betaine and proline betaine uptake. Probably responsible for energy coupling to the transport system. This Escherichia coli (strain K12) protein is Glycine betaine/proline betaine transport system ATP-binding protein ProV.